An 82-amino-acid polypeptide reads, in one-letter code: MAVRMRLKRMGAKKQPSYRIVVADVRAPRDGRFIEELGHYNPTTEPVTLEINEEKAKKWLQEGAKPSQKVRSLLTQAGVVEK.

This sequence belongs to the bacterial ribosomal protein bS16 family.

This Natranaerobius thermophilus (strain ATCC BAA-1301 / DSM 18059 / JW/NM-WN-LF) protein is Small ribosomal subunit protein bS16.